The following is an 876-amino-acid chain: MSKSTAEIRQAFLDFFHSKGHQVVASSSLVPHNDPTLLFTNAGMNQFKDVFLGLDKRNYSRATTSQRCVRAGGKHNDLENVGYTARHHTFFEMLGNFSFGDYFKHDAIQFAWELLTSEKWFALPKERLWVTVYESDDEAYEIWEKEVGIPRERIIRIGDNKGAPYASDNFWQMGDTGPCGPCTEIFYDHGDHIWGGPPGSPEEDGDRYIEIWNIVFMQFNRQADGTMEPLPKPSVDTGMGLERIAAVLQHVNSNYDIDLFRTLIQAVAKVTGATDLSNKSLRVIADHIRSCAFLIADGVMPSNENRGYVLRRIIRRAVRHGNMLGAKETFFYKLVGPLIDVMGSAGEDLKRQQAQVEQVLKTEEEQFARTLERGLALLDEELAKLSGDTLDGETAFRLYDTYGFPVDLTADVCRERNIKVDEAGFEAAMEEQRRRAREASGFGADYNAMIRVDSASEFKGYDHLELNGKVTALFVDGKAVDAINAGQEAVVVLDQTPFYAESGGQVGDKGELKGANFSFAVEDTQKYGQAIGHIGKLATGSLKVGDAVQADVDEARRARIRLNHSATHLMHAALRQVLGTHVSQKGSLVNDKVLRFDFSHNEAMKPEEIRAVEDLVNAQIRRNLPIETNIMDLEAAKAKGAMALFGEKYDERVRVLSMGDFSTELCGGTHASRTGDIGLFRIISESGTAAGVRRIEAVTGEGAIATVHADSDRLSEVAHLLKGDSNNLADKVRSVLERTRQLEKELQQLKEQAAAQESANLSSKAIDVNGVKLLVSELSGVEPKMLRTMVDDLKNQLGSTIIVLATVAEGKVSLIAGVSKDVTDRVKAGELIGMVAQQVGGKGGGRPDMAQAGGTDAAALPAALASVKGWVSAKLQ.

Lys74 is modified (N6-acetyllysine). Residues His564, His568, Cys666, and His670 each coordinate Zn(2+).

The protein belongs to the class-II aminoacyl-tRNA synthetase family. In terms of assembly, homotetramer. Requires Zn(2+) as cofactor.

It localises to the cytoplasm. The enzyme catalyses tRNA(Ala) + L-alanine + ATP = L-alanyl-tRNA(Ala) + AMP + diphosphate. Functionally, catalyzes the attachment of alanine to tRNA(Ala) in a two-step reaction: alanine is first activated by ATP to form Ala-AMP and then transferred to the acceptor end of tRNA(Ala). Also edits incorrectly charged Ser-tRNA(Ala) and Gly-tRNA(Ala) via its editing domain. The sequence is that of Alanine--tRNA ligase from Escherichia coli (strain SMS-3-5 / SECEC).